The sequence spans 1530 residues: Brefeldin A resistance protein (1530 aa).

The segment covering 1-26 (MNQNSDTTHGQALGSTLNHTTEVTRI) has biased composition (polar residues). A disordered region spans residues 1–100 (MNQNSDTTHG…SDDSSVDRLA (100 aa)). N-linked (GlcNAc...) asparagine glycosylation is present at N28. Positions 36–48 (SSSNVDESLDSSN) are enriched in low complexity. Residues 54–64 (KASHTNEEYRS) show a composition bias toward basic and acidic residues. N67 carries an N-linked (GlcNAc...) asparagine glycan. Low complexity predominate over residues 72–93 (PSSSNEPSPESSSNSDSSSSDD). Positions 153–410 (KTFPDIFLQP…FLDMGFDCHP (258 aa)) constitute an ABC transporter 1 domain. N-linked (GlcNAc...) asparagine glycans are attached at residues N273, N334, and N450. Residues S486 and S489 each carry the phosphoserine modification. Position 491 is a phosphothreonine (T491). A run of 6 helical transmembrane segments spans residues 539-559 (AYIG…GSIF), 575-595 (VLFF…ANMF), 620-640 (LIVD…VLYF), 649-669 (GGFW…SAFF), 684-704 (ALGG…IPNI), and 791-811 (LAII…ASET). The interval 843–864 (PLDLETGQDTQGGDVVKESPDN) is disordered. Residues 882–1125 (FSWRNLNYDI…LLNYFESHGA (244 aa)) enclose the ABC transporter 2 domain. Residue 918–925 (GESGAGKT) participates in ATP binding. Residues N1159 and N1175 are each glycosylated (N-linked (GlcNAc...) asparagine). T1186 is subject to Phosphothreonine. The next 6 helical transmembrane spans lie at 1220–1240 (ILMS…FTFY), 1255–1275 (AVFM…PKFI), 1300–1320 (AIIV…LCWF), 1338–1358 (YAWL…QAVA), 1367–1387 (ASVV…VLQP), and 1392–1412 (VGFW…EGLL). N1449 and N1460 each carry an N-linked (GlcNAc...) asparagine glycan. The helical transmembrane segment at 1492–1512 (GIFVGYVFFNIFAVLLLFYVF) threads the bilayer.

The protein belongs to the ABC transporter superfamily. ABCG family. PDR (TC 3.A.1.205) subfamily.

The protein resides in the membrane. Its function is as follows. Confers hyper-resistance to brefeldin A (BFA), an inhibitor of intracellular protein transport. Could serve as an efflux pump of various antibiotics. The protein is Brefeldin A resistance protein (bfr1) of Schizosaccharomyces pombe (strain 972 / ATCC 24843) (Fission yeast).